Consider the following 444-residue polypeptide: UDP-N-acetylmuramate--L-alanine ligase (444 aa).

110 to 116 (GAHGKTS) provides a ligand contact to ATP.

It belongs to the MurCDEF family. In terms of processing, phosphorylated by StkP in vitro. Dephosphorylated by PhpP in vitro.

Its subcellular location is the cytoplasm. The enzyme catalyses UDP-N-acetyl-alpha-D-muramate + L-alanine + ATP = UDP-N-acetyl-alpha-D-muramoyl-L-alanine + ADP + phosphate + H(+). It participates in cell wall biogenesis; peptidoglycan biosynthesis. Its function is as follows. Cell wall formation. The protein is UDP-N-acetylmuramate--L-alanine ligase of Streptococcus pneumoniae serotype 4 (strain ATCC BAA-334 / TIGR4).